A 373-amino-acid chain; its full sequence is 3-dehydroquinate synthase (373 aa).

NAD(+) is bound by residues 67–72 (EGEQAK), 101–105 (GVVLD), 125–126 (TT), Lys-138, and Lys-147. Zn(2+) contacts are provided by Glu-180, His-240, and His-256.

This sequence belongs to the sugar phosphate cyclases superfamily. Dehydroquinate synthase family. It depends on NAD(+) as a cofactor. Co(2+) serves as cofactor. Zn(2+) is required as a cofactor.

Its subcellular location is the cytoplasm. It catalyses the reaction 7-phospho-2-dehydro-3-deoxy-D-arabino-heptonate = 3-dehydroquinate + phosphate. The protein operates within metabolic intermediate biosynthesis; chorismate biosynthesis; chorismate from D-erythrose 4-phosphate and phosphoenolpyruvate: step 2/7. In terms of biological role, catalyzes the conversion of 3-deoxy-D-arabino-heptulosonate 7-phosphate (DAHP) to dehydroquinate (DHQ). In Chlamydia muridarum (strain MoPn / Nigg), this protein is 3-dehydroquinate synthase (aroB).